Consider the following 347-residue polypeptide: GMP reductase (347 aa).

Residue 108–131 (TDFIKLSEILAKSEDLNFICIDIA) participates in NADP(+) binding. K(+) contacts are provided by Gly181 and Gly183. The active-site Thioimidate intermediate is Cys186. An NADP(+)-binding site is contributed by 216 to 239 (IIGDGGCSCAGDVAKAFGGGADFV).

Belongs to the IMPDH/GMPR family. GuaC type 1 subfamily. In terms of assembly, homotetramer.

The enzyme catalyses IMP + NH4(+) + NADP(+) = GMP + NADPH + 2 H(+). In terms of biological role, catalyzes the irreversible NADPH-dependent deamination of GMP to IMP. It functions in the conversion of nucleobase, nucleoside and nucleotide derivatives of G to A nucleotides, and in maintaining the intracellular balance of A and G nucleotides. This chain is GMP reductase, found in Shewanella pealeana (strain ATCC 700345 / ANG-SQ1).